The chain runs to 448 residues: MTISSRAEPLSISQLNLDAQGLLESSFPLIWLQGELSNFSRPASGHWYFSLKDTRAQINGAMFRNRNRLLNFAPQNGEQVLVRAKITLYVPRGNFQIVVEHMEPAGQGALKAQFDALKAQLQSEGLFAQEHKRTLPAWPNQIGVITSPSGAAIRDILQVLQRRCPSIPVLIYPAAVQGAEAPAQLRQALALAVARNECDVLILGRGGGSLEDLWAFNDEGLARAVANCPIPIVSAVGHEVDTGLTDFAADLRAPTPSAAAELVSPDLSIVSQRLAGLHRRLRWVMAQELRTVQERLRHLSQRLRSPRQHLEQSSQRLDELQNRLQRQMQHRLTLLQGRLQPSQQRLARLSPQRLLVERQQRLATLSKRLPQPILRQLQQQQLQLAGLSKRLHTASPLETLARGYSITFKGNQAVRSVEQLQAGDTLTTRLADGEIIARVEHVQVSDTD.

This sequence belongs to the XseA family. Heterooligomer composed of large and small subunits.

The protein resides in the cytoplasm. The catalysed reaction is Exonucleolytic cleavage in either 5'- to 3'- or 3'- to 5'-direction to yield nucleoside 5'-phosphates.. In terms of biological role, bidirectionally degrades single-stranded DNA into large acid-insoluble oligonucleotides, which are then degraded further into small acid-soluble oligonucleotides. The chain is Exodeoxyribonuclease 7 large subunit from Alcanivorax borkumensis (strain ATCC 700651 / DSM 11573 / NCIMB 13689 / SK2).